A 210-amino-acid polypeptide reads, in one-letter code: Large ribosomal subunit protein bL25 (210 aa).

Residues 190–210 form a disordered region; the sequence is LKSEGAEGGEAEAGQAEEGEE. The span at 196–210 shows a compositional bias: acidic residues; the sequence is EGGEAEAGQAEEGEE.

This sequence belongs to the bacterial ribosomal protein bL25 family. CTC subfamily. In terms of assembly, part of the 50S ribosomal subunit; part of the 5S rRNA/L5/L18/L25 subcomplex. Contacts the 5S rRNA. Binds to the 5S rRNA independently of L5 and L18.

Functionally, this is one of the proteins that binds to the 5S RNA in the ribosome where it forms part of the central protuberance. This Chelativorans sp. (strain BNC1) protein is Large ribosomal subunit protein bL25.